Consider the following 595-residue polypeptide: NADH-quinone oxidoreductase subunit C/D (595 aa).

Residues 1–186 (MVTDNSKATD…TPYFLNNAKQ (186 aa)) are NADH dehydrogenase I subunit C. Residues 210-595 (DFMFLNLGPN…IDIVMADTDR (386 aa)) are NADH dehydrogenase I subunit D.

This sequence in the N-terminal section; belongs to the complex I 30 kDa subunit family. It in the C-terminal section; belongs to the complex I 49 kDa subunit family. In terms of assembly, NDH-1 is composed of 13 different subunits. Subunits NuoB, CD, E, F, and G constitute the peripheral sector of the complex.

The protein resides in the cell inner membrane. The catalysed reaction is a quinone + NADH + 5 H(+)(in) = a quinol + NAD(+) + 4 H(+)(out). Functionally, NDH-1 shuttles electrons from NADH, via FMN and iron-sulfur (Fe-S) centers, to quinones in the respiratory chain. The immediate electron acceptor for the enzyme in this species is believed to be ubiquinone. Couples the redox reaction to proton translocation (for every two electrons transferred, four hydrogen ions are translocated across the cytoplasmic membrane), and thus conserves the redox energy in a proton gradient. In Psychrobacter sp. (strain PRwf-1), this protein is NADH-quinone oxidoreductase subunit C/D.